The primary structure comprises 220 residues: ATP-dependent dethiobiotin synthetase BioD (220 aa).

12 to 17 contacts ATP; the sequence is DVGKTI. T16 is a binding site for Mg(2+). The active site involves K37. Substrate is bound at residue T41. Residues D49, 107–110, 167–168, and 197–199 contribute to the ATP site; these read EGAG, GS, and PAG. 2 residues coordinate Mg(2+): D49 and E107.

The protein belongs to the dethiobiotin synthetase family. As to quaternary structure, homodimer. Requires Mg(2+) as cofactor.

It is found in the cytoplasm. The catalysed reaction is (7R,8S)-7,8-diammoniononanoate + CO2 + ATP = (4R,5S)-dethiobiotin + ADP + phosphate + 3 H(+). It participates in cofactor biosynthesis; biotin biosynthesis; biotin from 7,8-diaminononanoate: step 1/2. Catalyzes a mechanistically unusual reaction, the ATP-dependent insertion of CO2 between the N7 and N8 nitrogen atoms of 7,8-diaminopelargonic acid (DAPA, also called 7,8-diammoniononanoate) to form a ureido ring. This Corynebacterium efficiens (strain DSM 44549 / YS-314 / AJ 12310 / JCM 11189 / NBRC 100395) protein is ATP-dependent dethiobiotin synthetase BioD.